Reading from the N-terminus, the 1376-residue chain is Protein FAM135B (1376 aa).

Residues 431–442 (NEDECEFSEESP) show a composition bias toward acidic residues. The disordered stretch occupies residues 431 to 489 (NEDECEFSEESPSENTHVGSKPHSIQSTTVHENASFEKPNVGTKAQEDCSTEGPEQGFD). Over residues 443–462 (SENTHVGSKPHSIQSTTVHE) the composition is skewed to polar residues.

It belongs to the FAM135 family.

The protein is Protein FAM135B (fam135b) of Xenopus laevis (African clawed frog).